We begin with the raw amino-acid sequence, 564 residues long: Septation ring formation regulator EzrA (564 aa).

Residues 1–4 lie on the Extracellular side of the membrane; sequence MVLY. A helical transmembrane segment spans residues 5–23; that stretch reads IILAIIVIILIAVGVLFYL. Residues 24–564 are Cytoplasmic-facing; the sequence is RSNKRQIIEK…KHIEEEVIKQ (541 aa). Coiled-coil stretches lie at residues 99-138, 190-223, 271-300, 350-435, and 471-550; these read SFNA…YKDN, DGNY…LIRE, LISR…LIEH, VRQF…RRLL, and VKQL…ESVE.

The protein belongs to the EzrA family.

The protein localises to the cell membrane. Its function is as follows. Negative regulator of FtsZ ring formation; modulates the frequency and position of FtsZ ring formation. Inhibits FtsZ ring formation at polar sites. Interacts either with FtsZ or with one of its binding partners to promote depolymerization. This is Septation ring formation regulator EzrA from Staphylococcus aureus (strain Mu3 / ATCC 700698).